A 465-amino-acid chain; its full sequence is Poly(A) polymerase I (465 aa).

Active-site residues include Asp80, Asp82, and Asp162. A disordered region spans residues 430 to 465 (APPEQKGMLNELDDDPAPRRRRSRPRKRAPRREGTV). A compositionally biased stretch (basic residues) spans 448-459 (RRRRSRPRKRAP).

Belongs to the tRNA nucleotidyltransferase/poly(A) polymerase family.

The enzyme catalyses RNA(n) + ATP = RNA(n)-3'-adenine ribonucleotide + diphosphate. Functionally, adds poly(A) tail to the 3' end of many RNAs, which usually targets these RNAs for decay. Plays a significant role in the global control of gene expression, through influencing the rate of transcript degradation, and in the general RNA quality control. The chain is Poly(A) polymerase I from Salmonella typhi.